The primary structure comprises 1414 residues: Phenyloxazoline synthase MbtB (1414 aa).

Positions 5-78 (TACSEIIRAE…AWSQLVSAGT (74 aa)) constitute a Carrier 1 domain. Ser39 is modified (O-(pantetheine 4'-phosphoryl)serine). The tract at residues 96–394 (EGEPFPVAPM…SSLLLDVDLT (299 aa)) is condensation/cyclization. The segment at 579–975 (SYAQLRDQAS…RLPGVHAAAA (397 aa)) is adenylation. The Carrier 2 domain maps to 1057–1135 (APRTVLQRAL…ALAQLLTGRE (79 aa)). Ser1094 is modified (O-(pantetheine 4'-phosphoryl)serine). The interval 1188–1413 (GAVLVFPHAG…AVARMVSADV (226 aa)) is thioesterase.

It belongs to the ATP-dependent AMP-binding enzyme family. MbtB subfamily. Requires pantetheine 4'-phosphate as cofactor. In terms of processing, 4'-phosphopantetheine is transferred from CoA to a specific serine in each of the two carrier protein domains, leading to their activation from apo to holo forms.

The protein operates within siderophore biosynthesis; mycobactin biosynthesis. In terms of biological role, involved in the initial steps of the mycobactin biosynthetic pathway. Putatively couples activated salicylic acid with serine or threonine and cyclizes this precursor to the hydroxyphenyloxazoline ring system present in this class of siderophores. Essential for growth in macrophages. The polypeptide is Phenyloxazoline synthase MbtB (mbtB) (Mycobacterium tuberculosis (strain CDC 1551 / Oshkosh)).